The following is a 200-amino-acid chain: MSFSPLIRQLIDALRTLPGVGQKTAQRMALQLLERDRSGGVRLAQALSLAMEGVGHCRQCRTLTEQELCPQCADTRRDDTQLCVVEGPMDVYAVEQTGYRGRYFVLKGHLSPLDGLGPDAIGVPQLMARIEEQGSFTEVILATNPTVEGEATAHYIAQLLAEKGLVASRIAHGVPLGGELELVDGGTLAHAFAGRKPISL.

The C4-type zinc finger occupies 57–72 (CRQCRTLTEQELCPQC). Positions 80–175 (TQLCVVEGPM…VASRIAHGVP (96 aa)) constitute a Toprim domain.

Belongs to the RecR family.

Functionally, may play a role in DNA repair. It seems to be involved in an RecBC-independent recombinational process of DNA repair. It may act with RecF and RecO. The chain is Recombination protein RecR from Pseudomonas putida (strain W619).